Consider the following 137-residue polypeptide: Protein Turandot X (137 aa).

The N-terminal stretch at 1 to 24 (MKVPVFQLSCLLCLIVCLLCSVKA) is a signal peptide.

The protein belongs to the Turandot family.

It localises to the secreted. In terms of biological role, a humoral factor that may play a role in stress tolerance. The protein is Protein Turandot X of Drosophila persimilis (Fruit fly).